A 457-amino-acid chain; its full sequence is D-xylose transporter (457 aa).

The next 10 helical transmembrane spans lie at 14-34, 46-66, 81-101, 104-124, 131-151, 164-184, 244-264, 281-301, 309-329, and 338-358; these read ALGGLLFGYDTGVISGAILFI, GWVVSAVLLGAILGAAIIGPS, IIFFVGALGSAFSPEFWTLII, IILGMAVGAASALIPTYLAEL, GTVSSLFQLMVMTGILLAYIT, WMLGFAAIPAALLFLGGLILP, LIIGIGLAIFQQVMGCNTVLY, LLAHIGIGIFNVIVTAIAVAI, KIVNIGAVGMGISLFVMSIGM, and AAIISVIALTVYIAFFSATWG. Glutamine 138 contributes to the beta-D-xylose binding site. Beta-D-xylose is bound by residues 254–255 and asparagine 260; that span reads QQ. Positions 362 and 385 each coordinate beta-D-xylose. A run of 2 helical transmembrane segments spans residues 380 to 400 and 402 to 422; these read FASVINWTANMIVSLTFPSLL and FFGTGSLFIGYGILCFASIWF.

Belongs to the major facilitator superfamily. Sugar transporter (TC 2.A.1.1) family.

The protein localises to the cell membrane. Transport is inhibited by 6-deoxy-D-glucose. Its function is as follows. Uptake of D-xylose across the boundary membrane with the concomitant transport of protons into the cell (symport system). Transport is driven by the proton motive force generated by either malolactic fermentation or by the metabolism of D-glucose. In Levilactobacillus brevis (Lactobacillus brevis), this protein is D-xylose transporter.